The primary structure comprises 2090 residues: Host cell factor 1 (2090 aa).

A2 carries the post-translational modification N-acetylalanine. A Phosphoserine modification is found at S6. Kelch repeat units follow at residues 44-89 (LIVV…GFVC), 93-140 (RLLV…RLGH), 148-194 (KCYL…ITYG), 217-265 (KLVI…TIGN), and 266-313 (KMYV…LMDT). Glycyl lysine isopeptide (Lys-Gly) (interchain with G-Cter in ubiquitin) cross-links involve residues K105, K163, and K244. K282 participates in a covalent cross-link: Glycyl lysine isopeptide (Lys-Gly) (interchain with G-Cter in SUMO2). The residue at position 288 (K288) is an N6-acetyllysine. Residue K363 forms a Glycyl lysine isopeptide (Lys-Gly) (interchain with G-Cter in ubiquitin) linkage. The Fibronectin type-III 1 domain maps to 366 to 469 (PPARVQLVRA…TIQVLPTVPG (104 aa)). The tract at residues 407–434 (ATATSPTPNPVPSVPANPPKSPAPAAAA) is disordered. The residue at position 411 (S411) is a Phosphoserine. Residues 413-428 (TPNPVPSVPANPPKSP) are compositionally biased toward pro residues. Residues 500–550 (LVTMRPAGQAGKAPVTVTSLPASVRMVVPTQSAQGTVIGSNPQMSGMAALA) are required for interaction with OGT. R504 and R524 each carry omega-N-methylarginine. Residues S598, S666, and S669 each carry the phosphoserine modification. Positions 610 to 722 (LKTAAAQVGT…KGPLPAGTIL (113 aa)) are interaction with SIN3A. An interaction with ZBTB17 region spans residues 750-902 (ILGISSVSPS…SLAGAGAHST (153 aa)). An N6-acetyllysine modification is found at K813. The tract at residues 813-912 (KIITAVPKIA…SASLATPITT (100 aa)) is interaction with GABP2. HCF repeat repeat units follow at residues 1010–1035 (TLVCSNPPCETHETGTTNTATTTVVA), 1072–1097 (VRVCSNPPCETHETGTTNTATTATSN), and 1101–1126 (QHGCSNPPCETHETGTTSTATTAMSS). The segment at 1098–1140 (MAGQHGCSNPPCETHETGTTSTATTAMSSMGTGQQRDTRHTSS) is disordered. Residues 1114–1130 (TGTTSTATTAMSSMGTG) are compositionally biased toward low complexity. An HCF repeat 4; degenerate repeat occupies 1157–1182 (TQGTVKPQCQTQQANMTNTTMTVQAT). Position 1204 is a phosphoserine (S1204). An Asymmetric dimethylarginine modification is found at R1216. A Phosphoserine modification is found at S1223. HCF repeat repeat units lie at residues 1295–1320 (TQVCSNPPCETHETGTTNTATTSNAG) and 1323–1348 (QRVCSNPPCETHETGTTHTATTATSN). 2 disordered regions span residues 1302 to 1374 (PCET…TTST) and 1444 to 1486 (TVTS…TTVS). The span at 1308–1321 (TGTTNTATTSNAGS) shows a compositional bias: low complexity. The HCF repeat 7; degenerate repeat unit spans residues 1358–1383 (QQPAGGRPCETHQTTSTGTTMSVSVG). The stretch at 1423-1448 (QRVCSNPPCETHETGTTHTATTVTSN) is one HCF repeat 8 repeat. Polar residues predominate over residues 1465–1475 (VVSTQGDSANI). Residues 1476-1486 (TSSSGITTTVS) are compositionally biased toward low complexity. T1500 is subject to Phosphothreonine. S1506, S1559, and S1826 each carry phosphoserine. Fibronectin type-III domains are found at residues 1853–1943 (PPPP…TCLP) and 1945–2061 (FPGA…TSKD). Glycyl lysine isopeptide (Lys-Gly) (interchain with G-Cter in ubiquitin) cross-links involve residues K1862 and K1863. S1893 is modified (phosphoserine). The tract at residues 2049-2090 (ATQVRWLQETSKDSSGTKPASKRPMSSPEMKSAPKKSKADGQ) is disordered. Residue K2060 is modified to N6-acetyllysine. K2079 is covalently cross-linked (Glycyl lysine isopeptide (Lys-Gly) (interchain with G-Cter in SUMO2)).

Composed predominantly of six polypeptides ranging from 110 to 150 kDa and a minor 300 kDa polypeptide. The majority of N- and C-terminal cleavage products remain tightly, albeit non-covalently, associated. Interacts with POU2F1, CREB3, ZBTB17, EGR2, E2F4, CREBZF, SP1, GABP2, Sin3 HDAC complex (SIN3A, HDAC1, HDAC2, SUDS3), SAP30, SIN3B and FHL2. Component of a MLL1 complex, composed of at least the core components KMT2A/MLL1, ASH2L, HCFC1, WDR5 and RBBP5, as well as the facultative components BACC1, CHD8, DPY30, E2F6, HCFC2, HSP70, INO80C, KANSL1, LAS1L, MAX, MCRS1, MEN1, MGA, KAT8, PELP1, PHF20, PRP31, RING2, RUVBL1, RUVBL2, SENP3, TAF1, TAF4, TAF6, TAF7, TAF9 and TEX10. Component of a THAP1/THAP3-HCFC1-OGT complex that is required for the regulation of the transcriptional activity of RRM1. Interacts directly with THAP3 (via its HBM). Interacts (via the Kelch-repeat domain) with THAP1 (via the HBM); the interaction recruits HCHC1 to the RRM1. Interacts directly with OGT; the interaction, which requires the HCFC1 cleavage site domain, glycosylates and promotes the proteolytic processing of HCFC1 and retains OGT in the nucleus. Component of the SET1 complex, at least composed of the catalytic subunit (SETD1A or SETD1B), WDR5, WDR82, RBBP5, ASH2L, CXXC1, HCFC1 and DPY30. Component of the NSL complex at least composed of MOF/KAT8, KANSL1, KANSL2, KANSL3, MCRS1, PHF20, OGT1/OGT, WDR5 and HCFC1. Component of a complex at least composed of ZNF335, HCFC1, CCAR2, EMSY, MKI67, RBBP5, ASH2L and WDR5; the complex is formed as a result of interactions between components of a nuclear receptor-mediated transcription complex and a histone methylation complex. Within the complex interacts with ZNF335. Interacts with TET2 and TET3. Interacts with HCFC1R1. Interacts with THAP11. Interacts (via Kelch domain) with KMT2E (via HBM motif). Interacts with E2F1. Accessory scaffold component of the polycomb repressive deubiquitinase (PR-DUB) complex, at least composed of BAP1, one of ASXL1, ASXL2 or (probably) ASXL3 and one of MBD5 or MBD6; the PR-DUB core associates with a number of accessory proteins, including FOXK1, FOXK2, KDM1B, HCFC1, YY1 and OGT. Interacts with YY1 (via Gly-rich region); the interaction is direct. Interacts with BAP1 (via HBM-like motif). Post-translationally, proteolytically cleaved at one or several PPCE--THET sites within the HCF repeats. Cleavage is promoted by O-glycosylation. Further cleavage of the primary N- and C-terminal chains results in a 'trimming' and accumulation of the smaller chains. Cleavage is promoted by O-glycosylation. O-glycosylated. GlcNAcylation by OGT promotes proteolytic processing. In terms of processing, ubiquitinated. Lys-1862 and Lys-1863 are ubiquitinated both via 'Lys-48'- and 'Lys-63'-linked polyubiquitin chains. BAP1 mediated deubiquitination of 'Lys-48'-linked polyubiquitin chains; deubiquitination by BAP1 does not seem to stabilize the protein.

It is found in the cytoplasm. The protein localises to the nucleus. Its function is as follows. Transcriptional coregulator. Serves as a scaffold protein, bridging interactions between transcription factors, including THAP11 and ZNF143, and transcriptional coregulators. Involved in control of the cell cycle. Also antagonizes transactivation by ZBTB17 and GABP2; represses ZBTB17 activation of the p15(INK4b) promoter and inhibits its ability to recruit p300. Coactivator for EGR2 and GABP2. Tethers the chromatin modifying Set1/Ash2 histone H3 'Lys-4' methyltransferase (H3K4me) and Sin3 histone deacetylase (HDAC) complexes (involved in the activation and repression of transcription respectively) together. As part of the NSL complex it may be involved in acetylation of nucleosomal histone H4 on several lysine residues. Recruits KMT2E to E2F1 responsive promoters promoting transcriptional activation and thereby facilitates G1 to S phase transition. Modulates expression of homeobox protein PDX1, perhaps acting in concert with transcription factor E2F1, thereby regulating pancreatic beta-cell growth and glucose-stimulated insulin secretion. May negatively modulate transcriptional activity of FOXO3. The chain is Host cell factor 1 from Mesocricetus auratus (Golden hamster).